Here is a 75-residue protein sequence, read N- to C-terminus: Neuropeptide-like protein 31 (75 aa).

The N-terminal stretch at 1 to 22 (MISTSSILVLVVLLACFMAANA) is a signal peptide. 5 positions are modified to tyrosine amide: Tyr-29, Tyr-39, Tyr-49, Tyr-56, and Tyr-64. At Trp-73 the chain carries Tryptophan amide.

This sequence belongs to the YARP (YGGW-amide related peptide) family. As to expression, expressed in hypoderm.

Its subcellular location is the secreted. Its function is as follows. Antimicrobial peptides that have antifungal activity against D.coniospora. Has weak antibacterial activity against Gram-positive bacteria M.luteus and Gram-negative E.coli. The protein is Neuropeptide-like protein 31 (nlp-31) of Caenorhabditis elegans.